The primary structure comprises 211 residues: uncharacterized protein (211 aa).

This is an uncharacterized protein from Homo sapiens (Human).